We begin with the raw amino-acid sequence, 517 residues long: Aldehyde dehydrogenase, mitochondrial (517 aa).

Residues 1 to 17 constitute a mitochondrion transit peptide; sequence MLRAAARFGPRLGRRLL. Positions 9–24 match the SIFI-degron motif; the sequence is GPRLGRRLLSAAATQA. K52, K73, K78, and K159 each carry N6-acetyllysine. 262-267 is a binding site for NAD(+); sequence GSTEIG. Catalysis depends on E285, which acts as the Proton acceptor. The active-site Nucleophile is C319. N6-acetyllysine occurs at positions 368, 383, 426, 428, and 451.

It belongs to the aldehyde dehydrogenase family. As to quaternary structure, homotetramer. Post-translationally, in response to mitochondrial stress, the precursor protein is ubiquitinated by the SIFI complex in the cytoplasm before mitochondrial import, leading to its degradation. Within the SIFI complex, UBR4 initiates ubiquitin chain that are further elongated or branched by KCMF1.

The protein localises to the mitochondrion matrix. The enzyme catalyses an aldehyde + NAD(+) + H2O = a carboxylate + NADH + 2 H(+). It participates in alcohol metabolism; ethanol degradation; acetate from ethanol: step 2/2. Functionally, required for clearance of cellular formaldehyde, a cytotoxic and carcinogenic metabolite that induces DNA damage. This is Aldehyde dehydrogenase, mitochondrial (ALDH2) from Homo sapiens (Human).